A 263-amino-acid chain; its full sequence is Sulfur carrier protein FdhD (263 aa).

Cysteine 107 (cysteine persulfide intermediate) is an active-site residue.

This sequence belongs to the FdhD family.

The protein resides in the cytoplasm. Its function is as follows. Required for formate dehydrogenase (FDH) activity. Acts as a sulfur carrier protein that transfers sulfur from IscS to the molybdenum cofactor prior to its insertion into FDH. In Geobacillus kaustophilus (strain HTA426), this protein is Sulfur carrier protein FdhD.